Here is a 591-residue protein sequence, read N- to C-terminus: Indole-3-acetic acid-amido synthetase GH3.10 (591 aa).

This sequence belongs to the IAA-amido conjugating enzyme family. As to expression, expressed in cotyledons and hypocotyls.

Catalyzes the synthesis of indole-3-acetic acid (IAA)-amino acid conjugates, providing a mechanism for the plant to cope with the presence of excess auxin. Involved in red light-specific hypocotyl elongation. May act downstream of a red light signal transduction and determine the degree of hypocotyl elongation. This is Indole-3-acetic acid-amido synthetase GH3.10 from Arabidopsis thaliana (Mouse-ear cress).